The primary structure comprises 72 residues: Translation initiation factor IF-1 (72 aa).

Residues 1–72 (MAKDDVIEVD…DKGRITFRYK (72 aa)) form the S1-like domain.

Belongs to the IF-1 family. In terms of assembly, component of the 30S ribosomal translation pre-initiation complex which assembles on the 30S ribosome in the order IF-2 and IF-3, IF-1 and N-formylmethionyl-tRNA(fMet); mRNA recruitment can occur at any time during PIC assembly.

The protein resides in the cytoplasm. In terms of biological role, one of the essential components for the initiation of protein synthesis. Stabilizes the binding of IF-2 and IF-3 on the 30S subunit to which N-formylmethionyl-tRNA(fMet) subsequently binds. Helps modulate mRNA selection, yielding the 30S pre-initiation complex (PIC). Upon addition of the 50S ribosomal subunit IF-1, IF-2 and IF-3 are released leaving the mature 70S translation initiation complex. This Wolinella succinogenes (strain ATCC 29543 / DSM 1740 / CCUG 13145 / JCM 31913 / LMG 7466 / NCTC 11488 / FDC 602W) (Vibrio succinogenes) protein is Translation initiation factor IF-1.